Reading from the N-terminus, the 706-residue chain is Polyribonucleotide nucleotidyltransferase (706 aa).

Residues Asp486 and Asp492 each coordinate Mg(2+). The KH domain occupies Pro553–Ile612. The region spanning Gly622–Lys690 is the S1 motif domain.

The protein belongs to the polyribonucleotide nucleotidyltransferase family. In terms of assembly, component of the RNA degradosome, which is a multiprotein complex involved in RNA processing and mRNA degradation. Mg(2+) is required as a cofactor.

It localises to the cytoplasm. The catalysed reaction is RNA(n+1) + phosphate = RNA(n) + a ribonucleoside 5'-diphosphate. In terms of biological role, involved in mRNA degradation. Catalyzes the phosphorolysis of single-stranded polyribonucleotides processively in the 3'- to 5'-direction. This chain is Polyribonucleotide nucleotidyltransferase, found in Pectobacterium carotovorum subsp. carotovorum (strain PC1).